The following is a 102-amino-acid chain: Small integral membrane protein 29 (102 aa).

Asn-3 carries an N-linked (GlcNAc...) asparagine glycan. The chain crosses the membrane as a helical span at residues 21-41 (VLGPFFLITLVGVVVAVVMYV).

The protein resides in the membrane. This is Small integral membrane protein 29 from Mus musculus (Mouse).